The following is a 118-amino-acid chain: Large ribosomal subunit protein bL20 (118 aa).

The protein belongs to the bacterial ribosomal protein bL20 family.

In terms of biological role, binds directly to 23S ribosomal RNA and is necessary for the in vitro assembly process of the 50S ribosomal subunit. It is not involved in the protein synthesizing functions of that subunit. In Pseudomonas fluorescens (strain SBW25), this protein is Large ribosomal subunit protein bL20.